A 1433-amino-acid polypeptide reads, in one-letter code: DNA-directed RNA polymerase subunit beta' (1433 aa).

Positions 66, 68, 81, and 84 each coordinate Zn(2+). Residues 328 to 347 (RKSSAVKTDSNRPLKSLSDS) form a disordered region. Polar residues predominate over residues 329–346 (KSSAVKTDSNRPLKSLSD). The Mg(2+) site is built by Asp477, Asp479, and Asp481. Cys825, Cys899, Cys906, and Cys909 together coordinate Zn(2+).

The protein belongs to the RNA polymerase beta' chain family. The RNAP catalytic core consists of 2 alpha, 1 beta, 1 beta' and 1 omega subunit. When a sigma factor is associated with the core the holoenzyme is formed, which can initiate transcription. It depends on Mg(2+) as a cofactor. The cofactor is Zn(2+).

The catalysed reaction is RNA(n) + a ribonucleoside 5'-triphosphate = RNA(n+1) + diphosphate. Its function is as follows. DNA-dependent RNA polymerase catalyzes the transcription of DNA into RNA using the four ribonucleoside triphosphates as substrates. This chain is DNA-directed RNA polymerase subunit beta', found in Christiangramia forsetii (strain DSM 17595 / CGMCC 1.15422 / KT0803) (Gramella forsetii).